A 190-amino-acid chain; its full sequence is Elongation factor P 2 (190 aa).

It belongs to the elongation factor P family.

The protein resides in the cytoplasm. It functions in the pathway protein biosynthesis; polypeptide chain elongation. Involved in peptide bond synthesis. Stimulates efficient translation and peptide-bond synthesis on native or reconstituted 70S ribosomes in vitro. Probably functions indirectly by altering the affinity of the ribosome for aminoacyl-tRNA, thus increasing their reactivity as acceptors for peptidyl transferase. The polypeptide is Elongation factor P 2 (efp2) (Chlamydia muridarum (strain MoPn / Nigg)).